Consider the following 183-residue polypeptide: CASP-like protein UU2 (183 aa).

Over 1 to 33 the chain is Cytoplasmic; it reads MEESQQQSSKFDAPPSPYVPSRVYLAQIYWKKP. A helical membrane pass occupies residues 34–54; sequence AIVVLRVLQFIFSLIAFSVMA. The Extracellular segment spans residues 55–72; the sequence is DVLHDVQGSIKSLSYTVA. A helical transmembrane segment spans residues 73–93; sequence IGVLACAYALAQLSFSLWCVI. At 94–118 the chain is on the cytoplasmic side; it reads RGATSSAGVTPLYQYATFICDQMST. The helical transmembrane segment at 119–139 threads the bilayer; the sequence is YFLISAASATATLIDVSGVCG. Residues 140-156 are Extracellular-facing; it reads SNGSGTNLCSRSTASVT. Asn-141 carries N-linked (GlcNAc...) asparagine glycosylation. Residues 157 to 177 traverse the membrane as a helical segment; that stretch reads FAFLAFLAFSASSVLTGYYLV. Topologically, residues 178–183 are cytoplasmic; sequence KCILKA.

It belongs to the Casparian strip membrane proteins (CASP) family. In terms of assembly, homodimer and heterodimers.

The protein resides in the cell membrane. The chain is CASP-like protein UU2 from Selaginella moellendorffii (Spikemoss).